A 439-amino-acid chain; its full sequence is GTPase Der (439 aa).

EngA-type G domains lie at 4–168 (PIVA…KDDE) and 177–352 (INIA…DNYT). GTP is bound by residues 10–17 (GRPNVGKS), 57–61 (DTGGI), 120–123 (NKID), 183–190 (GKPNVGKS), 230–234 (DTAGL), and 295–298 (NKWD). The KH-like domain occupies 353 to 437 (KRVKTGVLND…GIKTEFRERK (85 aa)).

The protein belongs to the TRAFAC class TrmE-Era-EngA-EngB-Septin-like GTPase superfamily. EngA (Der) GTPase family. As to quaternary structure, associates with the 50S ribosomal subunit.

GTPase that plays an essential role in the late steps of ribosome biogenesis. The chain is GTPase Der from Clostridium botulinum (strain Loch Maree / Type A3).